Consider the following 188-residue polypeptide: dCTP deaminase (188 aa).

Residues 111–116 (KSTYAR), 135–137 (TLE), glutamine 156, tyrosine 170, and glutamine 180 each bind dCTP. Glutamate 137 functions as the Proton donor/acceptor in the catalytic mechanism.

This sequence belongs to the dCTP deaminase family. As to quaternary structure, homotrimer.

The enzyme catalyses dCTP + H2O + H(+) = dUTP + NH4(+). Its pathway is pyrimidine metabolism; dUMP biosynthesis; dUMP from dCTP (dUTP route): step 1/2. Its function is as follows. Catalyzes the deamination of dCTP to dUTP. This Nitrosomonas europaea (strain ATCC 19718 / CIP 103999 / KCTC 2705 / NBRC 14298) protein is dCTP deaminase.